Reading from the N-terminus, the 113-residue chain is Hydrogenase maturation factor HypA (113 aa).

Position 2 (H2) interacts with Ni(2+). The Zn(2+) site is built by C73, C76, C89, and C92.

This sequence belongs to the HypA/HybF family.

Functionally, involved in the maturation of [NiFe] hydrogenases. Required for nickel insertion into the metal center of the hydrogenase. This chain is Hydrogenase maturation factor HypA, found in Azorhizobium caulinodans (strain ATCC 43989 / DSM 5975 / JCM 20966 / LMG 6465 / NBRC 14845 / NCIMB 13405 / ORS 571).